Reading from the N-terminus, the 378-residue chain is MAAKKDKSVPDSKITDKEGKEKAVKDAMAAITKGFGSGLIMKLGEKSSMNVESIPTGSINLDIALGIGGVPKGRIIEIYGAESSGKTTLALHVIAEAQKQGGTVAFIDAEHALDPVYAKALGVDIDELLISQPDYGEQALEIADTLVRSGAIDLIVIDSVAALVPKAEIDGEMSDQQMGLQARLMSKGLRKLTGNLNKYKTTMIFINQIREKIGVTYGPTTTTTGGKALKFYSSVRMEVKKMGTVKQGDDPIGSEVIVKVTKNKVAPPFKEAAFEILYGKGISKVGEIIDAAVAKDVIVKAGSWFSFRDQSIGQGKEKVRAELEINPELLAQVEKDLKEAIAKGPVDKKKKKSKKEASSDDTDDENLEIDDAIDENND.

The tract at residues 1–20 (MAAKKDKSVPDSKITDKEGK) is disordered. 80 to 87 (GAESSGKT) serves as a coordination point for ATP. Residues 344–378 (GPVDKKKKKSKKEASSDDTDDENLEIDDAIDENND) are disordered. The span at 359-378 (SDDTDDENLEIDDAIDENND) shows a compositional bias: acidic residues.

The protein belongs to the RecA family.

The protein resides in the cytoplasm. Functionally, can catalyze the hydrolysis of ATP in the presence of single-stranded DNA, the ATP-dependent uptake of single-stranded DNA by duplex DNA, and the ATP-dependent hybridization of homologous single-stranded DNAs. It interacts with LexA causing its activation and leading to its autocatalytic cleavage. This is Protein RecA from Fusobacterium nucleatum subsp. nucleatum (strain ATCC 25586 / DSM 15643 / BCRC 10681 / CIP 101130 / JCM 8532 / KCTC 2640 / LMG 13131 / VPI 4355).